Reading from the N-terminus, the 171-residue chain is MRYVTYIVLLILVVIFFSPLNFFNTNSEIINYLIRTFYHANLQHLLANSFSFYMLSFLEDVMGHAKFAFCIIFIWILSSMLLLAEHTAFPSRKVYTVGFSGVIFGLIVVYLMSLGKNRGLSIAGLVLSIIPQFFVSGISYEGHICGMIAGFVYVVLFPLPKGSVDNQVAMF.

Transmembrane regions (helical) follow at residues 3-23, 67-87, 94-114, and 119-139; these read YVTY…LNFF, FAFC…AEHT, VYTV…LMSL, and GLSI…SGIS. Catalysis depends on S100, which acts as the Nucleophile. H143 is an active-site residue. Residues 144-164 traverse the membrane as a helical segment; the sequence is ICGMIAGFVYVVLFPLPKGSV.

The protein belongs to the peptidase S54 family.

The protein resides in the membrane. Probable serine protease. The sequence is that of Putative rhomboid protein L523 from Acanthamoeba polyphaga mimivirus (APMV).